Here is a 244-residue protein sequence, read N- to C-terminus: 23S rRNA (guanosine-2'-O-)-methyltransferase RlmB (244 aa).

Residues G196, I216, and L225 each coordinate S-adenosyl-L-methionine.

The protein belongs to the class IV-like SAM-binding methyltransferase superfamily. RNA methyltransferase TrmH family. RlmB subfamily. As to quaternary structure, homodimer.

It is found in the cytoplasm. The enzyme catalyses guanosine(2251) in 23S rRNA + S-adenosyl-L-methionine = 2'-O-methylguanosine(2251) in 23S rRNA + S-adenosyl-L-homocysteine + H(+). Specifically methylates the ribose of guanosine 2251 in 23S rRNA. The sequence is that of 23S rRNA (guanosine-2'-O-)-methyltransferase RlmB from Photorhabdus laumondii subsp. laumondii (strain DSM 15139 / CIP 105565 / TT01) (Photorhabdus luminescens subsp. laumondii).